We begin with the raw amino-acid sequence, 515 residues long: 2-isopropylmalate synthase (515 aa).

In terms of domain architecture, Pyruvate carboxyltransferase spans 4–266; the sequence is IKFFDTTLRD…ETRLNLQEIK (263 aa). Mn(2+) is bound by residues Asp-13, His-201, His-203, and Asn-237. Positions 391–515 are regulatory domain; that stretch reads QLSSIQVQYG…RAENEKVATS (125 aa).

It belongs to the alpha-IPM synthase/homocitrate synthase family. LeuA type 1 subfamily. In terms of assembly, homodimer. Mn(2+) serves as cofactor.

It localises to the cytoplasm. It catalyses the reaction 3-methyl-2-oxobutanoate + acetyl-CoA + H2O = (2S)-2-isopropylmalate + CoA + H(+). Its pathway is amino-acid biosynthesis; L-leucine biosynthesis; L-leucine from 3-methyl-2-oxobutanoate: step 1/4. In terms of biological role, catalyzes the condensation of the acetyl group of acetyl-CoA with 3-methyl-2-oxobutanoate (2-ketoisovalerate) to form 3-carboxy-3-hydroxy-4-methylpentanoate (2-isopropylmalate). The sequence is that of 2-isopropylmalate synthase from Geobacillus stearothermophilus (Bacillus stearothermophilus).